We begin with the raw amino-acid sequence, 346 residues long: Eukaryotic translation initiation factor 3 subunit I (346 aa).

WD repeat units follow at residues 8-49 (GHER…GTYH), 50-91 (GHQG…KTWD), 145-184 (CEDSKATVAGWSYLSKYIIAGHEDGSVSQFDGKNGDLLYN), 189-228 (ELNQPITDLQWSHDRTYFITASKDKTSKLITAKDLEVLKT), and 286-325 (GHFGPLNTVAADPTGKSYASGGEDGYVRIHHFDKGYFDFM).

The protein belongs to the eIF-3 subunit I family. Component of the eukaryotic translation initiation factor 3 (eIF-3) complex.

The protein localises to the cytoplasm. In terms of biological role, component of the eukaryotic translation initiation factor 3 (eIF-3) complex, which is involved in protein synthesis of a specialized repertoire of mRNAs and, together with other initiation factors, stimulates binding of mRNA and methionyl-tRNAi to the 40S ribosome. The eIF-3 complex specifically targets and initiates translation of a subset of mRNAs involved in cell proliferation. The protein is Eukaryotic translation initiation factor 3 subunit I (tif-34) of Neurospora crassa (strain ATCC 24698 / 74-OR23-1A / CBS 708.71 / DSM 1257 / FGSC 987).